Here is a 72-residue protein sequence, read N- to C-terminus: uncharacterized protein (72 aa).

Belongs to the ycf76 family.

The protein resides in the plastid. It localises to the chloroplast. This is an uncharacterized protein from Oryza nivara (Indian wild rice).